The chain runs to 189 residues: Apolipoprotein D (189 aa).

Residues 1-20 (MVMLLLLLSALAGLFGAAEG) form the signal peptide. At glutamine 21 the chain carries Pyrrolidone carboxylic acid. Cystine bridges form between cysteine 28-cysteine 134 and cysteine 61-cysteine 185. 2 N-linked (GlcNAc...) asparagine glycosylation sites follow: asparagine 65 and asparagine 98.

Belongs to the calycin superfamily. Lipocalin family. In terms of assembly, homodimer.

Its subcellular location is the secreted. APOD occurs in the macromolecular complex with lecithin-cholesterol acyltransferase. It is probably involved in the transport and binding of bilin. Appears to be able to transport a variety of ligands in a number of different contexts. In Macaca fascicularis (Crab-eating macaque), this protein is Apolipoprotein D (APOD).